We begin with the raw amino-acid sequence, 511 residues long: Cobyric acid synthase (511 aa).

Residues 251 to 443 (LLDIAIICLP…IHGIFDNDVF (193 aa)) enclose the GATase cobBQ-type domain. The active-site Nucleophile is C332. H435 is a catalytic residue.

Belongs to the CobB/CobQ family. CobQ subfamily.

Its pathway is cofactor biosynthesis; adenosylcobalamin biosynthesis. Catalyzes amidations at positions B, D, E, and G on adenosylcobyrinic A,C-diamide. NH(2) groups are provided by glutamine, and one molecule of ATP is hydrogenolyzed for each amidation. In Listeria monocytogenes serotype 4a (strain HCC23), this protein is Cobyric acid synthase.